The following is a 110-amino-acid chain: uncharacterized protein (110 aa).

The N-terminal stretch at 1-16 (MKKILLIASMTAGLTA) is a signal peptide. The N-palmitoyl cysteine moiety is linked to residue cysteine 17. Cysteine 17 is lipidated: S-diacylglycerol cysteine.

Its subcellular location is the cell membrane. This is an uncharacterized protein from Salmonella typhimurium (strain LT2 / SGSC1412 / ATCC 700720).